The sequence spans 352 residues: Molybdenum import ATP-binding protein ModC (352 aa).

One can recognise an ABC transporter domain in the interval M1–E229. G31–T38 contributes to the ATP binding site. The Mop domain maps to Q289–A352.

This sequence belongs to the ABC transporter superfamily. Molybdate importer (TC 3.A.1.8) family. The complex is composed of two ATP-binding proteins (ModC), two transmembrane proteins (ModB) and a solute-binding protein (ModA).

Its subcellular location is the cell inner membrane. It catalyses the reaction molybdate(out) + ATP + H2O = molybdate(in) + ADP + phosphate + H(+). Part of the ABC transporter complex ModABC involved in molybdenum import. Responsible for energy coupling to the transport system. This chain is Molybdenum import ATP-binding protein ModC, found in Escherichia coli O6:K15:H31 (strain 536 / UPEC).